The primary structure comprises 500 residues: NAD(P)H-quinone oxidoreductase chain 4, chloroplastic (500 aa).

Transmembrane regions (helical) follow at residues 4–24 (FPWL…MLFL), 35–55 (YTIS…CYNF), 87–107 (IGTI…AFPV), 134–154 (LLLF…LLSM), 167–187 (FILY…GISL), 211–231 (ILFY…IPLH), 242–262 (HYST…YGLV), 272–292 (AHSM…IYAA), 305–325 (IAYS…SITD), 330–350 (GAIL…FLAG), 386–406 (LALP…GIIT), 416–436 (IFII…LLSM), and 462–482 (LFLS…PDFV).

The protein belongs to the complex I subunit 4 family.

The protein resides in the plastid. It is found in the chloroplast thylakoid membrane. The enzyme catalyses a plastoquinone + NADH + (n+1) H(+)(in) = a plastoquinol + NAD(+) + n H(+)(out). The catalysed reaction is a plastoquinone + NADPH + (n+1) H(+)(in) = a plastoquinol + NADP(+) + n H(+)(out). In Crucihimalaya wallichii (Rock-cress), this protein is NAD(P)H-quinone oxidoreductase chain 4, chloroplastic.